Here is a 233-residue protein sequence, read N- to C-terminus: Large ribosomal subunit protein uL1 (233 aa).

It belongs to the universal ribosomal protein uL1 family. As to quaternary structure, part of the 50S ribosomal subunit.

In terms of biological role, binds directly to 23S rRNA. The L1 stalk is quite mobile in the ribosome, and is involved in E site tRNA release. Its function is as follows. Protein L1 is also a translational repressor protein, it controls the translation of the L11 operon by binding to its mRNA. The sequence is that of Large ribosomal subunit protein uL1 from Pelobacter propionicus (strain DSM 2379 / NBRC 103807 / OttBd1).